Here is a 61-residue protein sequence, read N- to C-terminus: Metallothionein-2 (61 aa).

N-acetylmethionine is present on Met1. Residues 1 to 29 (MDPNCSCAAGDSCTCAGSCKCKECKCTSC) form a beta region. The a divalent metal cation site is built by Cys5, Cys7, Cys13, Cys15, Cys19, Cys21, Cys24, Cys26, Cys29, Cys33, Cys34, Cys36, Cys37, Cys41, Cys44, Cys48, Cys50, and Cys57. An alpha region spans residues 30-61 (KKSCCSCCPVGCAKCAQGCICKGASDKCSCCA). Ser58 carries the post-translational modification Phosphoserine. 2 residues coordinate a divalent metal cation: Cys59 and Cys60.

Belongs to the metallothionein superfamily. Type 1 family. As to quaternary structure, interacts with EOLA1.

Metallothioneins have a high content of cysteine residues that bind various heavy metals; these proteins are transcriptionally regulated by both heavy metals and glucocorticoids. In Homo sapiens (Human), this protein is Metallothionein-2.